Reading from the N-terminus, the 120-residue chain is MALDTDKIIEELKGASILELNDLVKAIEDEFDVTAAAPVAAAGAADAGAAKSEFDVELTEAGQEKVKVIKAVRDITGLGLKDSKDLVDGAPKNVKEGVSEDEANDIKAKLEEVGATVTLK.

The protein belongs to the bacterial ribosomal protein bL12 family. In terms of assembly, homodimer. Part of the ribosomal stalk of the 50S ribosomal subunit. Forms a multimeric L10(L12)X complex, where L10 forms an elongated spine to which 2 to 4 L12 dimers bind in a sequential fashion. Binds GTP-bound translation factors.

Its function is as follows. Forms part of the ribosomal stalk which helps the ribosome interact with GTP-bound translation factors. Is thus essential for accurate translation. In Lactobacillus helveticus (strain DPC 4571), this protein is Large ribosomal subunit protein bL12.